The chain runs to 332 residues: Heat-inducible transcription repressor HrcA (332 aa).

This sequence belongs to the HrcA family.

Negative regulator of class I heat shock genes (grpE-dnaK-dnaJ and groELS operons). Prevents heat-shock induction of these operons. In Mycoplasma mobile (strain ATCC 43663 / 163K / NCTC 11711) (Mesomycoplasma mobile), this protein is Heat-inducible transcription repressor HrcA.